Here is a 482-residue protein sequence, read N- to C-terminus: tRNA sulfurtransferase (482 aa).

In terms of domain architecture, THUMP spans 61 to 165 (LAIRDALTRI…DDRLLLIKGR (105 aa)). Residues 183 to 184 (LI), K265, G287, and Q296 contribute to the ATP site. An intrachain disulfide couples C344 to C456. Residues 404-482 (FGANDVILDI…GFANVKVYRP (79 aa)) form the Rhodanese domain. Catalysis depends on C456, which acts as the Cysteine persulfide intermediate.

This sequence belongs to the ThiI family.

The protein localises to the cytoplasm. It catalyses the reaction [ThiI sulfur-carrier protein]-S-sulfanyl-L-cysteine + a uridine in tRNA + 2 reduced [2Fe-2S]-[ferredoxin] + ATP + H(+) = [ThiI sulfur-carrier protein]-L-cysteine + a 4-thiouridine in tRNA + 2 oxidized [2Fe-2S]-[ferredoxin] + AMP + diphosphate. The enzyme catalyses [ThiS sulfur-carrier protein]-C-terminal Gly-Gly-AMP + S-sulfanyl-L-cysteinyl-[cysteine desulfurase] + AH2 = [ThiS sulfur-carrier protein]-C-terminal-Gly-aminoethanethioate + L-cysteinyl-[cysteine desulfurase] + A + AMP + 2 H(+). The protein operates within cofactor biosynthesis; thiamine diphosphate biosynthesis. In terms of biological role, catalyzes the ATP-dependent transfer of a sulfur to tRNA to produce 4-thiouridine in position 8 of tRNAs, which functions as a near-UV photosensor. Also catalyzes the transfer of sulfur to the sulfur carrier protein ThiS, forming ThiS-thiocarboxylate. This is a step in the synthesis of thiazole, in the thiamine biosynthesis pathway. The sulfur is donated as persulfide by IscS. This Salmonella arizonae (strain ATCC BAA-731 / CDC346-86 / RSK2980) protein is tRNA sulfurtransferase.